The chain runs to 272 residues: Glutamate 5-kinase (272 aa).

Residue Lys-14 coordinates ATP. Ser-54, Asp-141, and Asn-157 together coordinate substrate. ATP is bound by residues 177 to 178 (SD) and 219 to 225 (TGGMLSK).

This sequence belongs to the glutamate 5-kinase family.

The protein localises to the cytoplasm. It carries out the reaction L-glutamate + ATP = L-glutamyl 5-phosphate + ADP. Its pathway is amino-acid biosynthesis; L-proline biosynthesis; L-glutamate 5-semialdehyde from L-glutamate: step 1/2. Functionally, catalyzes the transfer of a phosphate group to glutamate to form L-glutamate 5-phosphate. The chain is Glutamate 5-kinase from Streptococcus pyogenes serotype M28 (strain MGAS6180).